The primary structure comprises 301 residues: NAD kinase (301 aa).

Asp84 serves as the catalytic Proton acceptor. NAD(+) is bound by residues 84–85 (DG), Arg89, 158–159 (NE), Lys169, Asn188, 199–204 (TAYSFS), and Gln258.

This sequence belongs to the NAD kinase family. It depends on a divalent metal cation as a cofactor.

It is found in the cytoplasm. It carries out the reaction NAD(+) + ATP = ADP + NADP(+) + H(+). Involved in the regulation of the intracellular balance of NAD and NADP, and is a key enzyme in the biosynthesis of NADP. Catalyzes specifically the phosphorylation on 2'-hydroxyl of the adenosine moiety of NAD to yield NADP. This is NAD kinase from Tropheryma whipplei (strain Twist) (Whipple's bacillus).